Consider the following 121-residue polypeptide: Large ribosomal subunit protein uL18 (121 aa).

The segment at 1–25 (MKIVISKPDKNKIRQKRHRRVRGKL) is disordered. Residues 13–23 (IRQKRHRRVRG) show a composition bias toward basic residues.

Belongs to the universal ribosomal protein uL18 family. Part of the 50S ribosomal subunit; part of the 5S rRNA/L5/L18/L25 subcomplex. Contacts the 5S and 23S rRNAs.

Functionally, this is one of the proteins that bind and probably mediate the attachment of the 5S RNA into the large ribosomal subunit, where it forms part of the central protuberance. The sequence is that of Large ribosomal subunit protein uL18 from Streptococcus pyogenes serotype M28 (strain MGAS6180).